A 677-amino-acid polypeptide reads, in one-letter code: Mitochondrial disaggregase (677 aa).

The N-terminal 57 residues, 1-57 (MMLSAVLRRTAPAPRLFLGLIKSPSLQSRGGAYNRSVITGDRGEPQRLRTAAWVRPG), are a transit peptide targeting the mitochondrion. A disordered region spans residues 64 to 103 (PGRGAATGGRRGERTEIPYLTAASSGRGPSPEETLPGQDS). The autoinhibitory stretch occupies residues 92-126 (PSPEETLPGQDSWNGVPNKAGLGMWALAMALVVQC). 4 ANK repeats span residues 133-162 (NKDA…DVNA), 166-195 (LGWT…DPNL), 235-265 (KGCT…PLQR), and 268-297 (MGHT…EKQR). Residues histidine 316, isoleucine 318, serine 353, glycine 354, isoleucine 355, glycine 356, lysine 357, threonine 358, glutamate 425, and asparagine 466 each contribute to the ATP site. The tract at residues 477-505 (LQLRQEALEMSRNRIAENLGDVQISDKIT) is regulatory; slows ATPase and disaggregase activities. Arginine 531 provides a ligand contact to ATP. Lysine 559 carries the N6-acetyllysine modification. Arginine 590 is an ATP binding site.

It belongs to the ClpA/ClpB family. In terms of assembly, homododecamer when substrate-bound; the homododecamer consists of 2 homohexamers stacked head-to-head via ANK repeat-mediated interactions. The active substrate-bound form is likely to exist in a dynamic equilibrium between homohexamers and homododecamers. Homotetradecamer in the unbound state which is remodeled upon substrate binding into the homododecamer. Interacts with PHB and PHB2. Interacts with MAVS; the interaction is enhanced by Sendai virus infection. Proteolytically cleaved by protease PARL. ATP-dependent protein disaggregase activity is stimulated by PARL-mediated cleavage of the N-terminal autoinhibitory peptide.

The protein resides in the mitochondrion intermembrane space. It carries out the reaction ATP + H2O = ADP + phosphate + H(+). With respect to regulation, disaggregase activity is inhibited by ADP. Functionally, functions as a regulatory ATPase and participates in secretion/protein trafficking process. Has ATP-dependent protein disaggregase activity and is required to maintain the solubility of key mitochondrial proteins. Involved in mitochondrial-mediated antiviral innate immunity, activates RIG-I-mediated signal transduction and production of IFNB1 and pro-inflammatory cytokine IL6. Plays a role in granulocyte differentiation. The chain is Mitochondrial disaggregase from Rattus norvegicus (Rat).